A 515-amino-acid polypeptide reads, in one-letter code: Maturase K (515 aa).

This sequence belongs to the intron maturase 2 family. MatK subfamily.

It is found in the plastid. The protein resides in the chloroplast. Usually encoded in the trnK tRNA gene intron. Probably assists in splicing its own and other chloroplast group II introns. This Picea mariana (Black spruce) protein is Maturase K.